The sequence spans 227 residues: 7-cyano-7-deazaguanine synthase (227 aa).

7 to 17 (VSGGMDSLVAT) lines the ATP pocket. Zn(2+) contacts are provided by Cys187, Cys195, Cys198, and Cys201.

It belongs to the QueC family. Requires Zn(2+) as cofactor.

The catalysed reaction is 7-carboxy-7-deazaguanine + NH4(+) + ATP = 7-cyano-7-deazaguanine + ADP + phosphate + H2O + H(+). It participates in purine metabolism; 7-cyano-7-deazaguanine biosynthesis. Catalyzes the ATP-dependent conversion of 7-carboxy-7-deazaguanine (CDG) to 7-cyano-7-deazaguanine (preQ(0)). The sequence is that of 7-cyano-7-deazaguanine synthase from Chlorobaculum parvum (strain DSM 263 / NCIMB 8327) (Chlorobium vibrioforme subsp. thiosulfatophilum).